Reading from the N-terminus, the 222-residue chain is DnaJ homolog subfamily B member 9 (222 aa).

Residues 1–23 form the signal peptide; it reads MATPQSVFVFAICILMITELILA. Positions 26-90 constitute a J domain; sequence SYYDILGVPK…HRRKEYDTVG (65 aa). The segment at 91–222 is divergent targeting domain; that stretch reads HTAFTNGKGQ…VTTYTDCSGQ (132 aa). Residue S133 is modified to Phosphoserine.

Interacts with HSPA5/BiP; interaction is direct. Interacts with ERN1/IRE1 (via the luminal region). Interacts with DERL1.

It localises to the endoplasmic reticulum lumen. In terms of biological role, co-chaperone for Hsp70 protein HSPA5/BiP that acts as a key repressor of the ERN1/IRE1-mediated unfolded protein response (UPR). J domain-containing co-chaperones stimulate the ATPase activity of Hsp70 proteins and are required for efficient substrate recognition by Hsp70 proteins. In the unstressed endoplasmic reticulum, interacts with the luminal region of ERN1/IRE1 and selectively recruits HSPA5/BiP: HSPA5/BiP disrupts the dimerization of the active ERN1/IRE1 luminal region, thereby inactivating ERN1/IRE1. Also involved in endoplasmic reticulum-associated degradation (ERAD) of misfolded proteins. Required for survival of B-cell progenitors and normal antibody production. The sequence is that of DnaJ homolog subfamily B member 9 from Cricetulus griseus (Chinese hamster).